Consider the following 543-residue polypeptide: Lysosomal cobalamin transport escort protein LMBD1 (543 aa).

At 1-12 (MAAAAAGAASAE) the chain is on the extracellular side. Residues 13–33 (LVIGWCIFGLLLLAILAFCWI) traverse the membrane as a helical segment. At 34–52 (YVRKYQSQRESEVVSTITA) the chain is on the cytoplasmic side. Residues 53–73 (IFSLAIALITSALLPVDIFLV) form a helical membrane-spanning segment. At 74-102 (SYMKNQNGTFKDWANGNVSRQIEDTVLYG) the chain is on the extracellular side. Asn80 and Asn90 each carry an N-linked (GlcNAc...) asparagine glycan. Residues 103–123 (YYTLYSVILFCVFFWIPFVYF) traverse the membrane as a helical segment. The Cytoplasmic portion of the chain corresponds to 124 to 146 (YYEEKDDDDTGKCTQVKMALKYT). A helical transmembrane segment spans residues 147-167 (LGFVVICALLLLVGAFVPLNL). Topologically, residues 168 to 190 (PDNKNSTEWEKVKFLFEELGSSH) are extracellular. Residue Asn172 is glycosylated (N-linked (GlcNAc...) asparagine). Residues 191 to 211 (GLAALSFSISSLTLVGMLAAI) traverse the membrane as a helical segment. Over 212–307 (IYTAYGMSAL…KFCGALRPLK (96 aa)) the chain is Cytoplasmic. The YERL motif; mediates interaction with adapter protein complex 2 and is essential for its function in clathrin-mediated endocytosis of INSR signature appears at 234-237 (YERL). Thr240 carries the post-translational modification Phosphothreonine. The short motif at 296–299 (WTKF) is the WTKF motif; mediates interaction with adapter protein complex 2 and is essential for its function in clathrin-mediated endocytosis of INSR element. The chain crosses the membrane as a helical span at residues 308–328 (IIWGIFFIFVALLFVISLFLS). The Extracellular segment spans residues 329 to 366 (NLDKALHSAGIDSGFIIFGANLSNPLNMLLPLLQTVFP). An N-linked (GlcNAc...) asparagine glycan is attached at Asn349. Residues 367–387 (LDYILITIIIMYFIFTSMAGI) form a helical membrane-spanning segment. The Cytoplasmic portion of the chain corresponds to 388-410 (RNIGIWFFWIRLYKIRRGRTRPQ). The helical transmembrane segment at 411 to 431 (ALLFLCMILLLIVLHTSYMIY) threads the bilayer. Over 432–488 (SLAPQYVMYGSQNYLIESNMTYNDHRGNSSLSVPKRCDADAPEDQCTVTRTYLFLHK) the chain is Extracellular. N-linked (GlcNAc...) asparagine glycosylation is found at Asn450 and Asn459. Residues 489-509 (FWFFSAAYYFGNWAFLGVFIV) traverse the membrane as a helical segment. Residues 510-543 (GFIVSCCKGKKSVLERVDEDDSDLSDDEPSLYSV) are Cytoplasmic-facing. A phosphoserine mark is found at Ser531 and Ser534.

This sequence belongs to the LIMR family. LMBRD1 subfamily. Interacts with ABCD4; this interaction induces the translocation of ABCD4 from the endoplasmic reticulum to the lysosome. Interacts with ABCD4 and MMACHC; this interaction ensures the transport of cobalamin from the lysosome to the cytoplasm. Interacts with INSR, adapter protein complex 2 and clathrin heavy chain. N-glycosylated.

The protein resides in the endoplasmic reticulum membrane. Its subcellular location is the lysosome membrane. It localises to the cell membrane. The protein localises to the cytoplasmic vesicle. It is found in the clathrin-coated vesicle. Functionally, lysosomal membrane chaperone required to export cobalamin (vitamin B12) from the lysosome to the cytosol, allowing its conversion to cofactors. Targets ABCD4 transporter from the endoplasmic reticulum to the lysosome. Then forms a complex with lysosomal ABCD4 and cytoplasmic MMACHC to transport cobalamin across the lysosomal membrane. Acts as an adapter protein which plays an important role in mediating and regulating the internalization of the insulin receptor (INSR). Involved in clathrin-mediated endocytosis of INSR via its interaction with adapter protein complex 2. Essential for the initiation of gastrulation and early formation of mesoderm structures during embryogenesis. The protein is Lysosomal cobalamin transport escort protein LMBD1 (LMBRD1) of Bos taurus (Bovine).